The sequence spans 279 residues: Phycobilisome rod-core linker polypeptide CpcG1 (279 aa).

One can recognise a PBS-linker domain in the interval 11–189 (TTQNQRVEGY…YWRNRLLEQF (179 aa)).

It belongs to the phycobilisome linker protein family. The phycobilisome is a hemidiscoidal structure that is composed of two distinct substructures: a core complex and a number of rods radiating from the core.

It localises to the cellular thylakoid membrane. Rod-core linker protein required for attachment of phycocyanin to allophycocyanin in cores of phycobilisomes. Functionally, linker polypeptides determine the state of aggregation and the location of the disk-shaped phycobiliprotein units within the phycobilisome and modulate their spectroscopic properties in order to mediate a directed and optimal energy transfer. The sequence is that of Phycobilisome rod-core linker polypeptide CpcG1 (cpcG1) from Mastigocladus laminosus (Fischerella sp.).